A 617-amino-acid chain; its full sequence is Neurosecretory protein VGF (617 aa).

The first 23 residues, 1-23, serve as a signal peptide directing secretion; it reads MKTFTLPASVLFCFLLLIRGLGA. Disordered stretches follow at residues 29–75, 94–113, 121–157, and 169–192; these read SDVY…GELF, PASP…EEAA, VRSQ…DRSE, and LRDF…ETRT. The span at 48-64 shows a compositional bias: basic and acidic residues; sequence AVSRPKDDSVPEVRAAR. Over residues 148 to 157 the composition is skewed to acidic residues; the sequence is NDPEADDRSE. At glutamine 180 the chain carries Pyrrolidone carboxylic acid. Residues 182–192 show a composition bias toward low complexity; sequence ETAAAETETRT. Glutamine 313 carries the pyrrolidone carboxylic acid modification. The disordered stretch occupies residues 348–603; that stretch reads DLGGRGLQET…AEERRLQEQE (256 aa). Acidic residues predominate over residues 378 to 397; the sequence is EDEVGEEDEEAAEAEAEAEE. Positions 418 to 436 are enriched in basic and acidic residues; it reads AEDKRSQEEAPGHRRKDAE. The residue at position 423 (serine 423) is a Phosphoserine. The span at 437-452 shows a compositional bias: acidic residues; the sequence is GTEEGGEEDDDDEEMD. The span at 491–501 shows a compositional bias: pro residues; the sequence is PPEPVPPPRAA. Over residues 577–601 the composition is skewed to basic and acidic residues; the sequence is HHPDLEAQARRAQEEADAEERRLQE.

As to quaternary structure, interacts with HSPA8 on cell membrane. Interacts with C3AR1. Interacts with C1QBP. Post-translationally, multiple peptides are derived from VGF, with activities in synaptic plasticity, antidepression, penile erection, autonomic activation, and increases in energy expenditure. Central and peripheral nervous systems, synthesized exclusively in neuronal and neuroendocrine cells. VGF and several of the derived peptides are present in the brain.

It is found in the secreted. It localises to the cytoplasmic vesicle. The protein resides in the secretory vesicle. In terms of biological role, secreted polyprotein that is packaged and proteolytically processed by prohormone convertases PCSK1 and PCSK2 in a cell-type-specific manner. VGF and peptides derived from its processing play many roles in neurogenesis and neuroplasticity associated with learning, memory, depression and chronic pain. Its function is as follows. Plays a role in the control of body fluid homeostasis by regulating vasopressin release. Suppresses presynaptic glutamatergic neurons connected to vasopressin neurons. Functionally, plays a role in the control of body fluid homeostasis by regulating vasopressin release. Activates GABAergic interneurons which are inhibitory neurons of the nervous system and thereby suppresses presynaptic glutamatergic neurons. Also stimulates feeding behavior in an orexin-dependent manner in the hypothalamus. Functions as a positive regulator for the activation of orexin neurons resulting in elevated gastric acid secretion and gastric emptying. Secreted multifunctional neuropeptide that binds to different cell receptors and thereby plays multiple physiological roles including modulation of energy expenditure, pain, response to stress, gastric regulation, glucose homeostasis as well as lipolysis. Activates the G-protein-coupled receptor C3AR1 via a folding-upon-binding mechanism leading to enhanced lipolysis in adipocytes. Interacts with C1QBP receptor in macrophages and microglia causing increased levels of intracellular calcium and hypersensitivity. In terms of biological role, plays a role in the regulation of memory formation and depression-related behaviors potentially by influencing synaptic plasticity and neurogenesis. Induces acute and transient activation of the NTRK2/TRKB receptor and subsequent CREB phosphorylation. Also induces insulin secretion in insulinoma cells by increasing intracellular calcium mobilization. The chain is Neurosecretory protein VGF (Vgf) from Rattus norvegicus (Rat).